A 456-amino-acid chain; its full sequence is Chromosomal replication initiator protein DnaA 1 (456 aa).

The tract at residues 1-68 (MRAWEEFLLL…KASLINNNGK (68 aa)) is domain I, interacts with DnaA modulators. Residues 68 to 101 (KPIRVRVTSLDKSTPFKETQIQQEKTAYFTMKYG) form a domain II region. The segment at 102–320 (DIDPNMSFAN…HALTTLAKRV (219 aa)) is domain III, AAA+ region. ATP-binding residues include S150, G152, K153, and T154. Residues 321–456 (AYKKLSHQML…AYQSLDFIED (136 aa)) are domain IV, binds dsDNA.

The protein belongs to the DnaA family. In terms of assembly, oligomerizes as a right-handed, spiral filament on DNA at oriC.

Its subcellular location is the cytoplasm. Its function is as follows. Plays an essential role in the initiation and regulation of chromosomal replication. ATP-DnaA binds to the origin of replication (oriC) to initiate formation of the DNA replication initiation complex once per cell cycle. Binds the DnaA box (a 9 base pair repeat at the origin) and separates the double-stranded (ds)DNA. Forms a right-handed helical filament on oriC DNA; dsDNA binds to the exterior of the filament while single-stranded (ss)DNA is stabiized in the filament's interior. The ATP-DnaA-oriC complex binds and stabilizes one strand of the AT-rich DNA unwinding element (DUE), permitting loading of DNA polymerase. After initiation quickly degrades to an ADP-DnaA complex that is not apt for DNA replication. Binds acidic phospholipids. The polypeptide is Chromosomal replication initiator protein DnaA 1 (Chlamydia trachomatis serovar D (strain ATCC VR-885 / DSM 19411 / UW-3/Cx)).